Reading from the N-terminus, the 493-residue chain is Cytochrome P450 monooxygenase olcG (493 aa).

A helical membrane pass occupies residues 15 to 35 (GILATGALVIFVALFLATFQF). Cysteine 429 is a heme binding site.

Belongs to the cytochrome P450 family. Requires heme as cofactor.

It localises to the membrane. The protein operates within secondary metabolite biosynthesis; terpenoid biosynthesis. Functionally, cytochrome P450 monooxygenase; part of the gene cluster that mediates the biosynthesis of 15-deoxyoxalicine B. The first step of the pathway is the synthesis of nicotinyl-CoA from nicotinic acid by the nicotinic acid-CoA ligase olcI. Nicotinyl-CoA is then a substrate of polyketide synthase olcA to produce 4-hydroxy-6-(3-pyridinyl)-2H-pyran-2-one (HPPO) which is further prenylated by the polyprenyl transferase olcH to yield geranylgeranyl-HPPO. Geranylgeranyl pyrophosphate is provided by the cluster-specific geranylgeranyl pyrophosphate synthase olcC. The FAD-dependent monooxygenase olcE catalyzes the epoxidation of geranylgeranyl-HPPO and the terpene cyclase olcD catalyzes the cyclization of the terpenoid component, resulting in the formation of the tricyclic terpene moiety seen in predecaturin E. The cytochrome P450 monooxygenase then catalyzes the allylic oxidation of predecaturin E, which is followed by spirocylization with concomitant loss of one molecule of water to form decaturin E. Decaturin E is the substrate of the cytochrome P450 monooxygenase olcJ which hydroxylates it at the C-29 position to form decaturin F. The short-chain dehydrogenase/reductase olcF may catalyze the oxidation of decaturin F to generate the 29-hydroxyl-27-one intermediate, and subsequent hemiacetal formation probably leads to the formation of decaturin C. The dioxygenase olcK may be a peroxisomal enzyme that catalyzes the hydroxylation of decaturin C into decaturin A once decaturin C is shuttled into the peroxisome by the MFS transporter olcL. Finally the cytochrome P450 monooxygenase olcB catalyzes the oxidative rearrangement to yield 15-deoxyoxalicine B. In the absence of olcJ, decaturin E may be shunted to a pathway in which it is oxidized to a ketone, possibly by olcF, to form decaturin D, which undergoes further allylic oxidation to yield decaturin G. Moreover, in the absence of oclK or oclL, oclB can convert decaturin C into 15-deoxyoxalicine A. The chain is Cytochrome P450 monooxygenase olcG from Penicillium canescens.